A 461-amino-acid chain; its full sequence is Deoxyhypusine synthase (461 aa).

Spermidine is bound by residues 166 to 167 (EH), Glu331, His377, 403 to 405 (GSD), and 412 to 418 (EAVSWGK). The active-site Nucleophile is Lys418. A helical membrane pass occupies residues 428–448 (VYSEVTIVFPLIVVHVFVAWV).

The protein belongs to the deoxyhypusine synthase family. As to quaternary structure, heterotetramer formed by a homodimer of the non-catalytic regulatory subunit DHSp and a homodimer of the catalytic subunit DHSc where DHSc appears to bind spermidine and DHSp appears to bind NAD(+). It depends on NAD(+) as a cofactor.

It localises to the membrane. The enzyme catalyses [eIF5A protein]-L-lysine + spermidine = [eIF5A protein]-deoxyhypusine + propane-1,3-diamine. It participates in protein modification; eIF5A hypusination. Allosterically activated by DHSp. Inhibited by spermididine analog N1-guanyl-1,7-diamineoheptane (GC7). Functionally, in association with the non-catalytic regulatory subunit DHSp, catalyzes the NAD-dependent oxidative cleavage of spermidine and the subsequent transfer of the butylamine moiety of spermidine to the epsilon-amino group of a specific lysine residue of the eIF5A precursor protein to form the intermediate deoxyhypusine residue. Regulates protein levels of its regulatory subunit DHSp. Required for cell growth and survival. The polypeptide is Deoxyhypusine synthase (Trypanosoma brucei brucei (strain 927/4 GUTat10.1)).